A 142-amino-acid polypeptide reads, in one-letter code: MLNKIQQRNSDIYSMTPFNFFEDFRRNLFNDLKSNLIKTDIHETDNEYVVEAELPGIPKEDIQVNYENGVLTISGQRQIDAAIEDEKGKLIHSERSLTSVRRQYLLENVKEDEIKASYSDGILKVTLPKDSNKEIKTSIPIE.

Residues 27-142 (NLFNDLKSNL…KEIKTSIPIE (116 aa)) enclose the sHSP domain.

Belongs to the small heat shock protein (HSP20) family.

The protein resides in the cytoplasm. The protein is Heat shock protein HSP.16.4 of Streptococcus thermophilus.